We begin with the raw amino-acid sequence, 38 residues long: Toxin Bcg III 31.16 (38 aa).

Intrachain disulfides connect Cys-4-Cys-37, Cys-6-Cys-30, and Cys-20-Cys-38.

The protein belongs to the sea anemone type 3 (BDS) potassium channel toxin family.

The protein resides in the secreted. Its subcellular location is the nematocyst. Possible modulator of crustacean voltage-gated sodium channels (Nav). In Bunodosoma cangicum (Sea anemone), this protein is Toxin Bcg III 31.16.